A 132-amino-acid polypeptide reads, in one-letter code: Fluoride-specific ion channel FluC 1 (132 aa).

A run of 4 helical transmembrane segments spans residues 11–31, 37–57, 70–92, and 105–125; these read AVFA…ALAI, WPWP…YFTT, RPLL…VETI, and AYSV…TVLV. Positions 79 and 82 each coordinate Na(+).

It belongs to the fluoride channel Fluc/FEX (TC 1.A.43) family.

The protein localises to the cell membrane. The enzyme catalyses fluoride(in) = fluoride(out). With respect to regulation, na(+) is not transported, but it plays an essential structural role and its presence is essential for fluoride channel function. Fluoride-specific ion channel. Important for reducing fluoride concentration in the cell, thus reducing its toxicity. This is Fluoride-specific ion channel FluC 1 from Mycobacterium bovis (strain ATCC BAA-935 / AF2122/97).